A 1525-amino-acid polypeptide reads, in one-letter code: Multidrug resistance protein mrp-7 (1525 aa).

Residues Met-1–Gln-24 are Extracellular-facing. Asn-18 is a glycosylation site (N-linked (GlcNAc...) asparagine). A helical membrane pass occupies residues His-25–Ala-45. The Cytoplasmic segment spans residues Gln-46–Lys-66. The chain crosses the membrane as a helical span at residues Leu-67–Ser-87. At Lys-88 to Ala-94 the chain is on the extracellular side. The chain crosses the membrane as a helical span at residues Tyr-95 to Ile-115. Residues Arg-116–Arg-118 lie on the Cytoplasmic side of the membrane. A helical membrane pass occupies residues Cys-119 to Ala-139. The Extracellular segment spans residues Pro-140–Gln-165. Residues Phe-166–Cys-186 form a helical membrane-spanning segment. The Cytoplasmic portion of the chain corresponds to Phe-187–Ser-346. Positions Leu-305–Gln-587 constitute an ABC transmembrane type-1 1 domain. A helical membrane pass occupies residues Ile-347–Met-367. Residues Phe-368–Leu-434 lie on the Extracellular side of the membrane. Residues Val-435 to Phe-455 form a helical membrane-spanning segment. Over Val-456–Ser-535 the chain is Cytoplasmic. A helical membrane pass occupies residues Pro-536–Leu-556. Over Thr-557–Ala-561 the chain is Extracellular. A helical membrane pass occupies residues Phe-562 to Ile-582. Over Asn-583–Ala-953 the chain is Cytoplasmic. The ABC transporter 1 domain maps to Val-622–Glu-849. Gly-659–Ser-666 contacts ATP. Residues Glu-900 to Glu-925 form a disordered region. Residues Gly-954–Leu-974 traverse the membrane as a helical segment. Residues Ile-959 to Ala-1245 form the ABC transmembrane type-1 2 domain. Residues Arg-975–Tyr-1005 are Extracellular-facing. A helical transmembrane segment spans residues Gly-1006–Val-1026. Over Gly-1027 to Thr-1068 the chain is Cytoplasmic. A helical membrane pass occupies residues Ile-1069–Phe-1089. Thr-1090 is a topological domain (extracellular). A helical transmembrane segment spans residues Leu-1091–Ile-1111. Over Tyr-1112 to Trp-1184 the chain is Cytoplasmic. A helical membrane pass occupies residues Leu-1185–Val-1205. Topologically, residues Leu-1206–Glu-1525 are extracellular. A glycan (N-linked (GlcNAc...) asparagine) is linked at Asn-1228. Positions Val-1282–Ala-1516 constitute an ABC transporter 2 domain. Gly-1316–Ser-1323 provides a ligand contact to ATP. Residues Asn-1358 and Asn-1418 are each glycosylated (N-linked (GlcNAc...) asparagine).

It belongs to the ABC transporter superfamily. ABCC family. Conjugate transporter (TC 3.A.1.208) subfamily. In terms of tissue distribution, expressed in head neurons, including the dopamine (DA) motor neuron, and other cells in the body.

Its subcellular location is the cell membrane. Its function is as follows. Negatively regulates cellular toxicity by mediating the export of environmental toxicants such as methylmercury out of the cell. Plays a role in inhibiting methylmercury-induced dopamine (DA) motor neuron degeneration. Not involved in Mn(2+)- or Al(3+)-associated toxicity. The protein is Multidrug resistance protein mrp-7 of Caenorhabditis elegans.